A 471-amino-acid chain; its full sequence is Phosphatidylserine synthase 1 (471 aa).

The residue at position 2 (Ala2) is an N-acetylalanine. At 2 to 35 (ASCVGSRTLSKDDVNYRMHFRMINEQQVEDITID) the chain is on the cytoplasmic side. Residues 36-56 (FFYRPHTITLLSFTIVSLMYF) traverse the membrane as a helical segment. The Lumenal segment spans residues 57–72 (AFTRDDSVPEDNIWRG). Residues 73–93 (ILSVIFFFLIISVLAFPNGPF) traverse the membrane as a helical segment. The Cytoplasmic segment spans residues 94-102 (TRPHPALWR). A helical transmembrane segment spans residues 103 to 123 (MVFGLSVLYFLFLVFLLFLNF). The Lumenal portion of the chain corresponds to 124–160 (EQVKSLMYWLDPNLRYATREADIMEYAVNCHVITWER). The chain crosses the membrane as a helical span at residues 161-181 (IVSHFDIFAFGHFWGWAMKAL). Topologically, residues 182–186 (LIRSY) are cytoplasmic. Residues 187-207 (GLCWTISITWELTELFFMHLL) traverse the membrane as a helical segment. The Lumenal portion of the chain corresponds to 208 to 216 (PNFAECWWD). A helical membrane pass occupies residues 217-237 (QVILDILLCNGGGIWLGMVVC). The Cytoplasmic portion of the chain corresponds to 238 to 286 (RFLEMRTYHWASFKDIHTTTGKIKRAVLQFTPASWTYVRWFDPKSSFQR). The chain crosses the membrane as a helical span at residues 287–307 (VAGVYLFMIIWQLTELNTFFL). Topologically, residues 308–309 (KH) are lumenal. The chain crosses the membrane as a helical span at residues 310-330 (IFVFQASHPLSWCRILFIGCI). Over 331-355 (TAPTVRQYYAYLTDTQCKRVGTQCW) the chain is Cytoplasmic. A helical membrane pass occupies residues 356–376 (VFGVIGFLEAIVCIKFGQDLF). The Lumenal portion of the chain corresponds to 377-380 (SKTQ). A helical membrane pass occupies residues 381-401 (ILYVVFWLLCVAFTTFLCLYG). The Cytoplasmic segment spans residues 402-471 (MVWYAEHYGH…SKVTNGVGKK (70 aa)). A phosphoserine mark is found at Ser417, Ser440, and Ser452. A disordered region spans residues 426–471 (ISWHHGKGSKGSEDSPPKHSSNNESHSSRRRNRHSKSKVTNGVGKK). Residues 453 to 462 (SRRRNRHSKS) show a composition bias toward basic residues.

Belongs to the phosphatidyl serine synthase family.

Its subcellular location is the endoplasmic reticulum membrane. It carries out the reaction a 1,2-diacyl-sn-glycero-3-phosphoethanolamine + L-serine = a 1,2-diacyl-sn-glycero-3-phospho-L-serine + ethanolamine. The catalysed reaction is a 1,2-diacyl-sn-glycero-3-phosphocholine + L-serine = a 1,2-diacyl-sn-glycero-3-phospho-L-serine + choline. It participates in phospholipid metabolism; phosphatidylserine biosynthesis. Its activity is regulated as follows. Inhibited by exogenous phosphatidylserine. Its function is as follows. Catalyzes a base-exchange reaction in which the polar head group of phosphatidylethanolamine (PE) or phosphatidylcholine (PC) is replaced by L-serine. Catalyzes mainly the conversion of phosphatidylcholine. Also converts, in vitro and to a lesser extent, phosphatidylethanolamine. In Cricetulus griseus (Chinese hamster), this protein is Phosphatidylserine synthase 1 (PTDSS1).